A 313-amino-acid chain; its full sequence is Homoserine O-acetyltransferase (313 aa).

The Acyl-thioester intermediate role is filled by cysteine 144. Substrate-binding residues include lysine 165 and serine 194. Histidine 236 serves as the catalytic Proton acceptor. The active site involves glutamate 238. Position 250 (arginine 250) interacts with substrate.

The protein belongs to the MetA family.

It localises to the cytoplasm. It carries out the reaction L-homoserine + acetyl-CoA = O-acetyl-L-homoserine + CoA. It functions in the pathway amino-acid biosynthesis; L-methionine biosynthesis via de novo pathway; O-acetyl-L-homoserine from L-homoserine: step 1/1. Functionally, transfers an acetyl group from acetyl-CoA to L-homoserine, forming acetyl-L-homoserine. The chain is Homoserine O-acetyltransferase from Jannaschia sp. (strain CCS1).